A 171-amino-acid chain; its full sequence is S-ribosylhomocysteine lyase (171 aa).

The Fe cation site is built by His-54, His-58, and Cys-128.

Belongs to the LuxS family. Homodimer. Fe cation is required as a cofactor.

The catalysed reaction is S-(5-deoxy-D-ribos-5-yl)-L-homocysteine = (S)-4,5-dihydroxypentane-2,3-dione + L-homocysteine. Functionally, involved in the synthesis of autoinducer 2 (AI-2) which is secreted by bacteria and is used to communicate both the cell density and the metabolic potential of the environment. The regulation of gene expression in response to changes in cell density is called quorum sensing. Catalyzes the transformation of S-ribosylhomocysteine (RHC) to homocysteine (HC) and 4,5-dihydroxy-2,3-pentadione (DPD). The chain is S-ribosylhomocysteine lyase from Campylobacter curvus (strain 525.92).